Here is a 706-residue protein sequence, read N- to C-terminus: Fatty acid oxidation complex subunit alpha (706 aa).

Positions 1–188 are enoyl-CoA hydratase; that stretch reads MDKSFTLNRL…KMGLVDDVVP (188 aa). Residues 308-706 form a 3-hydroxyacyl-CoA dehydrogenase region; the sequence is KAVNKVMVLG…MAESGSKFYE (399 aa).

In the N-terminal section; belongs to the enoyl-CoA hydratase/isomerase family. The protein in the central section; belongs to the 3-hydroxyacyl-CoA dehydrogenase family. In terms of assembly, heterotetramer of two alpha chains (FadJ) and two beta chains (FadI).

The protein resides in the cytoplasm. The catalysed reaction is a (3S)-3-hydroxyacyl-CoA = a (2E)-enoyl-CoA + H2O. It carries out the reaction a 4-saturated-(3S)-3-hydroxyacyl-CoA = a (3E)-enoyl-CoA + H2O. The enzyme catalyses a (3S)-3-hydroxyacyl-CoA + NAD(+) = a 3-oxoacyl-CoA + NADH + H(+). It catalyses the reaction (3S)-3-hydroxybutanoyl-CoA = (3R)-3-hydroxybutanoyl-CoA. It functions in the pathway lipid metabolism; fatty acid beta-oxidation. In terms of biological role, catalyzes the formation of a hydroxyacyl-CoA by addition of water on enoyl-CoA. Also exhibits 3-hydroxyacyl-CoA epimerase and 3-hydroxyacyl-CoA dehydrogenase activities. The chain is Fatty acid oxidation complex subunit alpha from Shewanella loihica (strain ATCC BAA-1088 / PV-4).